Here is a 104-residue protein sequence, read N- to C-terminus: Small ribosomal subunit protein bS6c (104 aa).

Belongs to the bacterial ribosomal protein bS6 family.

Its subcellular location is the plastid. The protein localises to the cyanelle. Its function is as follows. Binds together with bS18 to 16S ribosomal RNA. This is Small ribosomal subunit protein bS6c (rps6) from Cyanophora paradoxa.